The following is a 335-amino-acid chain: Methylthioribose-1-phosphate isomerase (335 aa).

Residues 43-45 (RGA), arginine 86, and glutamine 193 each bind substrate. Aspartate 234 (proton donor) is an active-site residue. 244-245 (NK) contacts substrate.

The protein belongs to the eIF-2B alpha/beta/delta subunits family. MtnA subfamily.

The enzyme catalyses 5-(methylsulfanyl)-alpha-D-ribose 1-phosphate = 5-(methylsulfanyl)-D-ribulose 1-phosphate. It participates in amino-acid biosynthesis; L-methionine biosynthesis via salvage pathway; L-methionine from S-methyl-5-thio-alpha-D-ribose 1-phosphate: step 1/6. Catalyzes the interconversion of methylthioribose-1-phosphate (MTR-1-P) into methylthioribulose-1-phosphate (MTRu-1-P). The sequence is that of Methylthioribose-1-phosphate isomerase from Parabacteroides distasonis (strain ATCC 8503 / DSM 20701 / CIP 104284 / JCM 5825 / NCTC 11152).